The chain runs to 813 residues: Serine/threonine-protein kinase kin-29 (813 aa).

One can recognise a Protein kinase domain in the interval 18 to 269 (YDVGRAIGKG…IQNVLAHRWM (252 aa)). ATP-binding positions include 24 to 32 (IGKGNFATV) and Lys47. The active-site Proton acceptor is Asp140. The tract at residues 383 to 412 (LSSPDCDSDDSSNSDLCDESPLSSLEPNHK) is disordered. Over residues 388–400 (CDSDDSSNSDLCD) the composition is skewed to acidic residues.

This sequence belongs to the protein kinase superfamily. CAMK Ser/Thr protein kinase family. SNF1 subfamily. Interacts with tax-6. Mg(2+) serves as cofactor. Post-translationally, autophosphorylated. Elevated cAMP levels appears to act via PKA to directly or indirectly phosphorylate multiple sites on kin-29 and inhibit function.

It localises to the cytoplasm. The protein resides in the nucleus. The catalysed reaction is L-seryl-[protein] + ATP = O-phospho-L-seryl-[protein] + ADP + H(+). It carries out the reaction L-threonyl-[protein] + ATP = O-phospho-L-threonyl-[protein] + ADP + H(+). Functionally, regulates chemoreceptor expression by phosphorylating the hda-4 class II histone deacetylase (HDAC) and inhibiting the gene repression functions of hda-4 and the mef-2 transcription factor, enabling the correct sensing and transduction of food signals. Role in determining body size, the dauer decision and serotonin-mediated egg laying. May modulate the Sma/Mab pathway and regulates development in the later larval stages. The sequence is that of Serine/threonine-protein kinase kin-29 from Caenorhabditis briggsae.